Reading from the N-terminus, the 145-residue chain is Probable inactive ribonuclease-like protein 12 (145 aa).

The signal sequence occupies residues 1 to 19 (MVLMVVVFLLLLFWENELT).

It belongs to the pancreatic ribonuclease family.

The protein localises to the secreted. Does not exhibit any ribonuclease activity. The polypeptide is Probable inactive ribonuclease-like protein 12 (Rnase12) (Mus musculus (Mouse)).